We begin with the raw amino-acid sequence, 115 residues long: MAGTVLGVGAGVFILALLWVAVLLLCVLLSRASGAARFSVIFLFFGAVIITSVLLLFPRAGEFPAPEVEVKIVDDFFIGRYVLLAFLSAIFLGGLFLVLIHYVLEPIYAKPLHSY.

Helical transmembrane passes span 5–25 (VLGV…VLLL), 38–58 (FSVI…LLFP), and 81–101 (YVLL…VLIH).

This sequence belongs to the TMEM218 family. Interacts with TMEM67.

The protein resides in the membrane. It is found in the cell projection. Its subcellular location is the cilium. Functionally, may be involved in ciliary biogenesis or function. The sequence is that of Transmembrane protein 218 (TMEM218) from Homo sapiens (Human).